The sequence spans 324 residues: Clavaminate synthase 1 (324 aa).

3 residues coordinate Fe cation: histidine 144, glutamate 146, and histidine 279. A 2-oxoglutarate-binding site is contributed by arginine 293.

Belongs to the clavaminate synthase family. Fe(2+) is required as a cofactor.

The catalysed reaction is deoxyamidinoproclavaminate + 2-oxoglutarate + O2 = amidinoproclavaminate + succinate + CO2. It carries out the reaction proclavaminate + 2-oxoglutarate + O2 = dihydroclavaminate + succinate + CO2 + H2O. The enzyme catalyses dihydroclavaminate + 2-oxoglutarate + O2 = clavaminate + succinate + CO2 + H2O. Its pathway is antibiotic biosynthesis; clavulanate biosynthesis; clavulanate from D-glyceraldehyde 3-phosphate and L-arginine: step 3/8. It participates in antibiotic biosynthesis; clavulanate biosynthesis; clavulanate from D-glyceraldehyde 3-phosphate and L-arginine: step 5/8. The protein operates within antibiotic biosynthesis; clavulanate biosynthesis; clavulanate from D-glyceraldehyde 3-phosphate and L-arginine: step 6/8. The protein is Clavaminate synthase 1 (cs1) of Streptomyces clavuligerus.